The chain runs to 157 residues: uncharacterized protein (157 aa).

Residues 9-146 (LLINYKTLDE…GDFYVWHPET (138 aa)) enclose the N-acetyltransferase domain.

This is an uncharacterized protein from Bacillus anthracis (strain CDC 684 / NRRL 3495).